A 403-amino-acid chain; its full sequence is Tryptophan synthase beta chain (403 aa).

K90 carries the post-translational modification N6-(pyridoxal phosphate)lysine.

It belongs to the TrpB family. As to quaternary structure, tetramer of two alpha and two beta chains. Requires pyridoxal 5'-phosphate as cofactor.

It carries out the reaction (1S,2R)-1-C-(indol-3-yl)glycerol 3-phosphate + L-serine = D-glyceraldehyde 3-phosphate + L-tryptophan + H2O. Its pathway is amino-acid biosynthesis; L-tryptophan biosynthesis; L-tryptophan from chorismate: step 5/5. In terms of biological role, the beta subunit is responsible for the synthesis of L-tryptophan from indole and L-serine. This chain is Tryptophan synthase beta chain, found in Leifsonia xyli subsp. xyli (strain CTCB07).